Consider the following 1068-residue polypeptide: Carbamoyl phosphate synthase large chain (1068 aa).

The interval 1–401 (MPRNNDIKKV…ALMKAIRSLE (401 aa)) is carboxyphosphate synthetic domain. Arg129, Arg169, Gly175, Gly176, Arg208, Ile210, Glu215, Gly241, Val242, His243, Gln284, and Glu298 together coordinate ATP. One can recognise an ATP-grasp 1 domain in the interval 133-327 (KDTMEKIGEP…IAKVTAKIAL (195 aa)). Residues Gln284, Glu298, and Asn300 each contribute to the Mg(2+) site. Residues Gln284, Glu298, and Asn300 each coordinate Mn(2+). The interval 402–546 (QHVDSLMSYD…YSVFGSENEA (145 aa)) is oligomerization domain. The tract at residues 547–930 (AETNPQKKVL…ALYKAFEGAG (384 aa)) is carbamoyl phosphate synthetic domain. One can recognise an ATP-grasp 2 domain in the interval 672–862 (DEILQKTGIP…IVDLAARIIM (191 aa)). 10 residues coordinate ATP: Arg708, Lys747, Leu749, Glu753, Gly778, Val779, His780, Ser781, Gln821, and Glu833. Mg(2+) contacts are provided by Gln821, Glu833, and Asn835. 3 residues coordinate Mn(2+): Gln821, Glu833, and Asn835. One can recognise an MGS-like domain in the interval 931–1068 (VELPKYKQMI…PVDIATVKNL (138 aa)). The allosteric domain stretch occupies residues 931 to 1068 (VELPKYKQMI…PVDIATVKNL (138 aa)).

The protein belongs to the CarB family. As to quaternary structure, composed of two chains; the small (or glutamine) chain promotes the hydrolysis of glutamine to ammonia, which is used by the large (or ammonia) chain to synthesize carbamoyl phosphate. Tetramer of heterodimers (alpha,beta)4. Requires Mg(2+) as cofactor. The cofactor is Mn(2+).

The catalysed reaction is hydrogencarbonate + L-glutamine + 2 ATP + H2O = carbamoyl phosphate + L-glutamate + 2 ADP + phosphate + 2 H(+). The enzyme catalyses hydrogencarbonate + NH4(+) + 2 ATP = carbamoyl phosphate + 2 ADP + phosphate + 2 H(+). It participates in amino-acid biosynthesis; L-arginine biosynthesis; carbamoyl phosphate from bicarbonate: step 1/1. The protein operates within pyrimidine metabolism; UMP biosynthesis via de novo pathway; (S)-dihydroorotate from bicarbonate: step 1/3. Its function is as follows. Large subunit of the glutamine-dependent carbamoyl phosphate synthetase (CPSase). CPSase catalyzes the formation of carbamoyl phosphate from the ammonia moiety of glutamine, carbonate, and phosphate donated by ATP, constituting the first step of 2 biosynthetic pathways, one leading to arginine and/or urea and the other to pyrimidine nucleotides. The large subunit (synthetase) binds the substrates ammonia (free or transferred from glutamine from the small subunit), hydrogencarbonate and ATP and carries out an ATP-coupled ligase reaction, activating hydrogencarbonate by forming carboxy phosphate which reacts with ammonia to form carbamoyl phosphate. This Agathobacter rectalis (strain ATCC 33656 / DSM 3377 / JCM 17463 / KCTC 5835 / VPI 0990) (Eubacterium rectale) protein is Carbamoyl phosphate synthase large chain.